A 952-amino-acid polypeptide reads, in one-letter code: Leucine--tRNA ligase (952 aa).

Positions 65-76 match the 'HIGH' region motif; that stretch reads PYPSGAGLHVGH. The short motif at 727–731 is the 'KMSKS' region element; it reads KMGKS. K730 lines the ATP pocket.

This sequence belongs to the class-I aminoacyl-tRNA synthetase family.

It localises to the cytoplasm. The enzyme catalyses tRNA(Leu) + L-leucine + ATP = L-leucyl-tRNA(Leu) + AMP + diphosphate. The polypeptide is Leucine--tRNA ligase (Salinispora arenicola (strain CNS-205)).